Here is a 276-residue protein sequence, read N- to C-terminus: ADP-dependent (S)-NAD(P)H-hydrate dehydratase (276 aa).

The YjeF C-terminal domain occupies 7–274 (METLNSINIP…NEIPYAMKQL (268 aa)). (6S)-NADPHX is bound by residues Ala42, Gly105, and His154. AMP is bound at residue Gly216. Asp217 contacts (6S)-NADPHX.

This sequence belongs to the NnrD/CARKD family. As to quaternary structure, homotetramer. It depends on Mg(2+) as a cofactor.

It carries out the reaction (6S)-NADHX + ADP = AMP + phosphate + NADH + H(+). The enzyme catalyses (6S)-NADPHX + ADP = AMP + phosphate + NADPH + H(+). Catalyzes the dehydration of the S-form of NAD(P)HX at the expense of ADP, which is converted to AMP. Together with NAD(P)HX epimerase, which catalyzes the epimerization of the S- and R-forms, the enzyme allows the repair of both epimers of NAD(P)HX, a damaged form of NAD(P)H that is a result of enzymatic or heat-dependent hydration. The polypeptide is ADP-dependent (S)-NAD(P)H-hydrate dehydratase (Staphylococcus aureus (strain NCTC 8325 / PS 47)).